We begin with the raw amino-acid sequence, 799 residues long: Elongation factor G, mitochondrial (799 aa).

The N-terminal 24 residues, 1-24, are a transit peptide targeting the mitochondrion; it reads MRCPSLARLPHRAVSGLTRTPVRF. In terms of domain architecture, tr-type G spans 97 to 384; sequence SRVRNIGIAA…GVIDYLPNPS (288 aa). Residues 106–113, 182–186, and 236–239 contribute to the GTP site; these read AHIDSGKT, DTPGH, and NKMD.

This sequence belongs to the TRAFAC class translation factor GTPase superfamily. Classic translation factor GTPase family. EF-G/EF-2 subfamily.

The protein localises to the mitochondrion. It participates in protein biosynthesis; polypeptide chain elongation. In terms of biological role, mitochondrial GTPase that catalyzes the GTP-dependent ribosomal translocation step during translation elongation. During this step, the ribosome changes from the pre-translocational (PRE) to the post-translocational (POST) state as the newly formed A-site-bound peptidyl-tRNA and P-site-bound deacylated tRNA move to the P and E sites, respectively. Catalyzes the coordinated movement of the two tRNA molecules, the mRNA and conformational changes in the ribosome. The chain is Elongation factor G, mitochondrial (mef1) from Emericella nidulans (strain FGSC A4 / ATCC 38163 / CBS 112.46 / NRRL 194 / M139) (Aspergillus nidulans).